Here is a 1567-residue protein sequence, read N- to C-terminus: ABC multidrug transporter MDR1 (1567 aa).

The span at 1 to 11 (MASQPPQPPSG) shows a compositional bias: pro residues. Positions 1 to 37 (MASQPPQPPSGQPDTQYEEYQSEVITETTNRPTPAAD) are disordered. The span at 22–32 (SEVITETTNRP) shows a compositional bias: polar residues. N-linked (GlcNAc...) asparagine glycosylation is found at N149, N157, and N356. The region spanning 167-432 (VQYQDTFLSP…FEEMGWYCPP (266 aa)) is the ABC transporter 1 domain. 6 helical membrane passes run 543–563 (STIA…SLFF), 571–591 (GFFA…LMSI), 636–656 (IPIK…LGGL), 661–681 (AKFF…SAIF), 691–711 (IPQA…YTGF), and 798–818 (LGIL…VSEL). N-linked (GlcNAc...) asparagine glycosylation is found at N819, N895, and N912. Residues 891–1134 (FTWRNVTYDI…LLNYFETHGA (244 aa)) form the ABC transporter 2 domain. 927 to 934 (GVSGAGKT) serves as a coordination point for ATP. Positions 1172 to 1202 (ESRHVQQELDRIQSETSKRNEGHGQSAEKEP) are disordered. A helical membrane pass occupies residues 1231–1251 (IWGKLLLGLASALFIGFSFFL). N1253 carries an N-linked (GlcNAc...) asparagine glycan. The next 5 membrane-spanning stretches (helical) occupy residues 1257–1277 (AGLQ…SSLV), 1305–1325 (VFLL…GIIA), 1345–1365 (ILLL…QMII), 1372–1392 (ETAG…NGVL), and 1498–1518 (GIGW…YYLI).

The protein belongs to the ABC transporter superfamily. ABCG family. PDR (TC 3.A.1.205) subfamily.

It is found in the cell membrane. The catalysed reaction is voriconazole(in) + ATP + H2O = voriconazole(out) + ADP + phosphate + H(+). It catalyses the reaction fluconazole(in) + ATP + H2O = fluconazole(out) + ADP + phosphate + H(+). It carries out the reaction (R)-miconazole(in) + ATP + H2O = (R)-miconazole(out) + ADP + phosphate + H(+). The enzyme catalyses (S)-miconazole(in) + ATP + H2O = (S)-miconazole(out) + ADP + phosphate + H(+). Its function is as follows. Pleiotropic ABC efflux transporter that may be involved in the modulation susceptibility to a wide range of unrelated cytotoxic compounds, including ethidium bromide, ketoconazole, cycloheximide, fluconazole, griseofulvin, imazalil and itraconazole. This is ABC multidrug transporter MDR1 from Trichophyton interdigitale (strain MR816).